Consider the following 274-residue polypeptide: MEESKTKRKEDRIDLKNTPPQKKSKRDSTNDETARTSLRSIMPRGYKMMENMGYKEGETLGSNESALKEPIKVEINTKRRGIRAEKPDPSTMNDMQMSEQRFIKRESEMKNNKRLKKIWYRIQKVAFEMMGDSDLYNPGEDPRDFNVLWRSYVMQLNEEVAKNDLNNHSNNDNEDKNNMIPMVNESLEASPAIKGEKFGRPSTLIDCDTSIIGSRITKDTELAELEELSIEKRITKLNIFLRSEKYYCFFCGIKYKDEGDLYEHCPGVNEDDHK.

A compositionally biased stretch (basic and acidic residues) spans 1–15 (MEESKTKRKEDRIDL). Positions 1–40 (MEESKTKRKEDRIDLKNTPPQKKSKRDSTNDETARTSLRS) are disordered. The G-patch domain maps to 41–87 (IMPRGYKMMENMGYKEGETLGSNESALKEPIKVEINTKRRGIRAEKP).

The protein localises to the cytoplasm. It localises to the nucleus. This is an uncharacterized protein from Saccharomyces cerevisiae (strain ATCC 204508 / S288c) (Baker's yeast).